The chain runs to 221 residues: uncharacterized protein (221 aa).

Positions 1 to 23 (MNKLIQLALFFTLMLTGCSNSST) are cleaved as a signal peptide. Residues 67 to 221 (ELGKRKAKEE…QGYIDPEDAP (155 aa)) form a disordered region. Positions 68-150 (LGKRKAKEEA…EQKANAEKKR (83 aa)) are enriched in basic and acidic residues. Residues 70–161 (KRKAKEEAEK…SQAQRQQTEA (92 aa)) are a coiled coil. Over residues 152-161 (SQAQRQQTEA) the composition is skewed to polar residues. The segment covering 162–174 (PSSNSQDPPSSSS) has biased composition (low complexity). The segment covering 175–184 (QTDKTIQQPA) has biased composition (polar residues). A compositionally biased stretch (basic and acidic residues) spans 195–205 (YEERKKWHDDQ).

This is an uncharacterized protein from Bacillus subtilis (strain 168).